A 150-amino-acid polypeptide reads, in one-letter code: Large ribosomal subunit protein uL15 (150 aa).

The disordered stretch occupies residues 1–52 (MITLNTLKDSTRKRKPRKRVGRGIGSKHGKTCGRGEKGAGARSGYKRRLGKE). A compositionally biased stretch (basic residues) spans 11–31 (TRKRKPRKRVGRGIGSKHGKT).

Belongs to the universal ribosomal protein uL15 family. In terms of assembly, part of the 50S ribosomal subunit.

Binds to the 23S rRNA. This Protochlamydia amoebophila (strain UWE25) protein is Large ribosomal subunit protein uL15.